A 316-amino-acid polypeptide reads, in one-letter code: Apolipoprotein E (316 aa).

The N-terminal stretch at 1 to 18 (MKALWAVLVVTLLAGCLA) is a signal peptide. A run of 8 repeats spans residues 76–97 (VLME…EQMG), 98–119 (PMAE…SRLG), 120–141 (ADME…TMLG), 142–163 (QSTE…KRLM), 164–185 (RDAE…EGAE), 186–207 (RGVG…QRTA), 208–229 (NLGA…ARIR), and 230–251 (GRLE…EQME). The segment at 76-251 (VLMEDTMTEL…RLEEVREQME (176 aa)) is 8 X 22 AA approximate tandem repeats. At methionine 139 the chain carries Methionine sulfoxide. Serine 143 is subject to Phosphoserine. Positions 154–164 (HLRKLRKRLMR) are LDL and other lipoprotein receptors binding. 158 to 161 (LRKR) is a heparin binding site. The tract at residues 206 to 286 (TANLGAGAAQ…GWFEPLVEDM (81 aa)) is lipid-binding and lipoprotein association. 225-232 (GARIRGRL) contributes to the heparin binding site. The interval 262–316 (QQMRLQAEIFQTRLKGWFEPLVEDMQRQWANLMEKIQASVATNPIPPSSVPQESQ) is homooligomerization. The segment at 274 to 286 (RLKGWFEPLVEDM) is specificity for association with VLDL.

It belongs to the apolipoprotein A1/A4/E family. As to quaternary structure, homotetramer. May interact with ABCA1; functionally associated with ABCA1 in the biogenesis of HDLs. May interact with APP/A4 amyloid-beta peptide; the interaction is extremely stable in vitro but its physiological significance is unclear. May interact with MAPT. May interact with MAP2. In the cerebrospinal fluid, interacts with secreted SORL1. Interacts with PMEL; this allows the loading of PMEL luminal fragment on ILVs to induce fibril nucleation. Post-translationally, APOE exists as multiple glycosylated and sialylated glycoforms within cells and in plasma. The extent of glycosylation and sialylation are tissue and context specific. Glycated in plasma VLDL. In terms of processing, phosphorylated by FAM20C in the extracellular medium.

The protein resides in the secreted. It localises to the extracellular space. Its subcellular location is the extracellular matrix. It is found in the extracellular vesicle. The protein localises to the endosome. The protein resides in the multivesicular body. Its function is as follows. APOE is an apolipoprotein, a protein associating with lipid particles, that mainly functions in lipoprotein-mediated lipid transport between organs via the plasma and interstitial fluids. APOE is a core component of plasma lipoproteins and is involved in their production, conversion and clearance. Apolipoproteins are amphipathic molecules that interact both with lipids of the lipoprotein particle core and the aqueous environment of the plasma. As such, APOE associates with chylomicrons, chylomicron remnants, very low density lipoproteins (VLDL) and intermediate density lipoproteins (IDL) but shows a preferential binding to high-density lipoproteins (HDL). It also binds a wide range of cellular receptors including the LDL receptor/LDLR, the LDL receptor-related proteins LRP1, LRP2 and LRP8 and the very low-density lipoprotein receptor/VLDLR that mediate the cellular uptake of the APOE-containing lipoprotein particles. Finally, APOE also has a heparin-binding activity and binds heparan-sulfate proteoglycans on the surface of cells, a property that supports the capture and the receptor-mediated uptake of APOE-containing lipoproteins by cells. A main function of APOE is to mediate lipoprotein clearance through the uptake of chylomicrons, VLDLs, and HDLs by hepatocytes. APOE is also involved in the biosynthesis by the liver of VLDLs as well as their uptake by peripheral tissues ensuring the delivery of triglycerides and energy storage in muscle, heart and adipose tissues. By participating in the lipoprotein-mediated distribution of lipids among tissues, APOE plays a critical role in plasma and tissues lipid homeostasis. APOE is also involved in two steps of reverse cholesterol transport, the HDLs-mediated transport of cholesterol from peripheral tissues to the liver, and thereby plays an important role in cholesterol homeostasis. First, it is functionally associated with ABCA1 in the biogenesis of HDLs in tissues. Second, it is enriched in circulating HDLs and mediates their uptake by hepatocytes. APOE also plays an important role in lipid transport in the central nervous system, regulating neuron survival and sprouting. This chain is Apolipoprotein E (APOE), found in Microtus ochrogaster (Prairie vole).